We begin with the raw amino-acid sequence, 472 residues long: Putative F-box/LRR-repeat protein At5g54820 (472 aa).

In terms of domain architecture, F-box spans 6 to 54 (QDRLSSLPDILLIMIISFLPLKECVRTSVLSKRWRYLCLETTNLSFKES). LRR repeat units follow at residues 58–87 (NPDITDAEYSRIVAYRSFFCSVDKWVSITQ), 135–164 (NGDISYRHFMYTLPKSVYSLTTLESLKIYG), 183–208 (IGWVRLENLHSLLSKSPSLQSLSIKN), 225–250 (VIEHSDFSYMQCAFELPRIHSFKYSG), 283–308 (SSRISGEVISRIINDLRAAETLTVCP), and 338–363 (MHTKEFNGIILLLNNCPNLETLGFDI).

This is Putative F-box/LRR-repeat protein At5g54820 from Arabidopsis thaliana (Mouse-ear cress).